We begin with the raw amino-acid sequence, 329 residues long: Cytosolic arginine sensor for mTORC1 subunit 2 (329 aa).

ACT domains lie at 72 to 139 (ADAT…MHTL) and 262 to 322 (ELWK…NALQ).

Belongs to the GATS family. In terms of assembly, may form homodimers and heterodimers.

It is found in the cytoplasm. The protein localises to the cytosol. Its function is as follows. Functions as a negative regulator of the TORC1 signaling pathway. This chain is Cytosolic arginine sensor for mTORC1 subunit 2, found in Xenopus laevis (African clawed frog).